The primary structure comprises 93 residues: Integration host factor subunit beta (93 aa).

This sequence belongs to the bacterial histone-like protein family. In terms of assembly, heterodimer of an alpha and a beta chain.

Its function is as follows. This protein is one of the two subunits of integration host factor, a specific DNA-binding protein that functions in genetic recombination as well as in transcriptional and translational control. In Cereibacter sphaeroides (strain ATCC 17023 / DSM 158 / JCM 6121 / CCUG 31486 / LMG 2827 / NBRC 12203 / NCIMB 8253 / ATH 2.4.1.) (Rhodobacter sphaeroides), this protein is Integration host factor subunit beta (ihfB).